The sequence spans 116 residues: G antigen 10 (116 aa).

The tract at residues 1 to 116 (MSWRGRSTYR…PEEGEKQSQC (116 aa)) is disordered. The segment covering 31–44 (FSDEVEPATPEEGE) has biased composition (acidic residues). 2 stretches are compositionally biased toward basic and acidic residues: residues 71–80 (PEADSQEQVH) and 102–116 (EEVKRPEEGEKQSQC).

It belongs to the GAGE family.

The sequence is that of G antigen 10 (GAGE10) from Homo sapiens (Human).